Here is a 257-residue protein sequence, read N- to C-terminus: uncharacterized protein (257 aa).

Residues 74-83 (LKDDLTRDNS) show a composition bias toward basic and acidic residues. 2 disordered regions span residues 74–115 (LKDD…TQKR) and 209–257 (PYLN…YDSF). Residues 100–113 (SFQNMNSSMPSSTQ) are compositionally biased toward polar residues. A compositionally biased stretch (acidic residues) spans 216–236 (SEDDTDSSIVEVETDYSEEEK).

The protein belongs to the asfivirus DP238L family.

This is an uncharacterized protein from Ornithodoros (relapsing fever ticks).